The primary structure comprises 884 residues: uncharacterized protein (884 aa).

This is an uncharacterized protein from Mycobacterium tuberculosis (strain ATCC 25618 / H37Rv).